We begin with the raw amino-acid sequence, 298 residues long: Bifunctional protein FolD (298 aa).

Residues 165 to 167 (GRS), serine 190, and isoleucine 231 contribute to the NADP(+) site.

It belongs to the tetrahydrofolate dehydrogenase/cyclohydrolase family. In terms of assembly, homodimer.

The enzyme catalyses (6R)-5,10-methylene-5,6,7,8-tetrahydrofolate + NADP(+) = (6R)-5,10-methenyltetrahydrofolate + NADPH. It carries out the reaction (6R)-5,10-methenyltetrahydrofolate + H2O = (6R)-10-formyltetrahydrofolate + H(+). It participates in one-carbon metabolism; tetrahydrofolate interconversion. Catalyzes the oxidation of 5,10-methylenetetrahydrofolate to 5,10-methenyltetrahydrofolate and then the hydrolysis of 5,10-methenyltetrahydrofolate to 10-formyltetrahydrofolate. This is Bifunctional protein FolD from Prochlorococcus marinus (strain MIT 9312).